A 430-amino-acid chain; its full sequence is Enolase (430 aa).

Residue glutamine 163 participates in (2R)-2-phosphoglycerate binding. The Proton donor role is filled by glutamate 205. Aspartate 242, glutamate 285, and aspartate 312 together coordinate Mg(2+). (2R)-2-phosphoglycerate contacts are provided by lysine 337, arginine 366, serine 367, and lysine 388. Catalysis depends on lysine 337, which acts as the Proton acceptor.

It belongs to the enolase family. Mg(2+) is required as a cofactor.

Its subcellular location is the cytoplasm. The protein resides in the secreted. It is found in the cell surface. The enzyme catalyses (2R)-2-phosphoglycerate = phosphoenolpyruvate + H2O. Its pathway is carbohydrate degradation; glycolysis; pyruvate from D-glyceraldehyde 3-phosphate: step 4/5. In terms of biological role, catalyzes the reversible conversion of 2-phosphoglycerate (2-PG) into phosphoenolpyruvate (PEP). It is essential for the degradation of carbohydrates via glycolysis. This is Enolase from Rhodopseudomonas palustris (strain BisB18).